The following is a 136-amino-acid chain: Small ribosomal subunit protein eS19 (136 aa).

The residue at position 23 (lysine 23) is an N6-acetyllysine. Arginine 67 carries the post-translational modification Omega-N-methylarginine. Lysine 111 and lysine 115 each carry N6-acetyllysine. The segment at 116-136 (DQDGGRKLTPQGQRDLDRIAG) is disordered.

It belongs to the eukaryotic ribosomal protein eS19 family. As to quaternary structure, component of the small ribosomal subunit. Part of the small subunit (SSU) processome, composed of more than 70 proteins and the RNA chaperone small nucleolar RNA (snoRNA) U3. Interacts with RPS19BP1; the interaction is direct and mediates the integration of RPS19 in state post-A1. Interacts with RPS19BP1.

Its subcellular location is the cytoplasm. The protein localises to the nucleus. It localises to the nucleolus. Its function is as follows. Component of the small ribosomal subunit. The ribosome is a large ribonucleoprotein complex responsible for the synthesis of proteins in the cell. Required for pre-rRNA processing and maturation of 40S ribosomal subunits. Part of the small subunit (SSU) processome, first precursor of the small eukaryotic ribosomal subunit. During the assembly of the SSU processome in the nucleolus, many ribosome biogenesis factors, an RNA chaperone and ribosomal proteins associate with the nascent pre-rRNA and work in concert to generate RNA folding, modifications, rearrangements and cleavage as well as targeted degradation of pre-ribosomal RNA by the RNA exosome. This is Small ribosomal subunit protein eS19 (RPS19) from Sus scrofa (Pig).